We begin with the raw amino-acid sequence, 1020 residues long: DNA-directed RNA polymerase 2, chloroplastic/mitochondrial (1020 aa).

The disordered stretch occupies residues 314–336; the sequence is KKQKAEKDKQKEDGEHVTQEQEK. Active-site residues include Asp-721, Lys-796, and Asp-953.

This sequence belongs to the phage and mitochondrial RNA polymerase family. In terms of tissue distribution, the highest levels of expression are detected in the mature leaves. The level of expression is lowest in the cotyledons.

Its subcellular location is the plastid. The protein resides in the chloroplast. It is found in the mitochondrion. It carries out the reaction RNA(n) + a ribonucleoside 5'-triphosphate = RNA(n+1) + diphosphate. Functionally, DNA-dependent RNA polymerase catalyzes the transcription of DNA into RNA using the four ribonucleoside triphosphates as substrates. The protein is DNA-directed RNA polymerase 2, chloroplastic/mitochondrial (RPOT2) of Nicotiana sylvestris (Wood tobacco).